We begin with the raw amino-acid sequence, 157 residues long: Transcriptional regulator AzlB (157 aa).

The HTH asnC-type domain maps to 5 to 66; sequence LDETDKAILR…IVDEKKLGIE (62 aa). The H-T-H motif DNA-binding region spans 24–43; sequence NLNLSKKIGLSPSACLARTK.

Functionally, transcriptional repressor of the azlBCD operon involved in branched-chain amino acid transport. This chain is Transcriptional regulator AzlB (azlB), found in Bacillus subtilis (strain 168).